The following is a 103-amino-acid chain: MYAVFQSGGKQHRVEAGHTVRLEKLEVATGETIEFDQVLLVADGETVHVGAPLVEGGKVVAEVISHGRADKVTIVKFRRRKHHDKKMGHRQWFTEVKITAINA.

The protein belongs to the bacterial ribosomal protein bL21 family. Part of the 50S ribosomal subunit. Contacts protein L20.

This protein binds to 23S rRNA in the presence of protein L20. This Shewanella pealeana (strain ATCC 700345 / ANG-SQ1) protein is Large ribosomal subunit protein bL21.